A 2148-amino-acid chain; its full sequence is Polyketide synthase 1 (2148 aa).

Residues 19–261 form an N-terminal acylcarrier protein transacylase domain (SAT) region; it reads FIFGDQSSCN…TPLAVHAPYH (243 aa). The region spanning 394 to 829 is the Ketosynthase family 3 (KS3) domain; the sequence is ESKIAIIGMS…GGNTALLVED (436 aa). Residues Cys566, His701, and His745 each act as for beta-ketoacyl synthase activity in the active site. Residues 929–1233 are malonyl-CoA:ACP transacylase (MAT) domain; that stretch reads AFVFSGQGSQ…PSLMRNKDGW (305 aa). Ser1018 functions as the For acyl/malonyl transferase activity in the catalytic mechanism. The segment at 1310-1624 is product template (PT) domain; sequence TASVHRIVHE…RKVLNTAMPP (315 aa). An N-terminal hotdog fold region spans residues 1314–1447; the sequence is HRIVHESVDK…SSLHFEQPKV (134 aa). The PKS/mFAS DH domain maps to 1314–1619; the sequence is HRIVHESVDK…FQGIPRKVLN (306 aa). Residue His1346 is the Proton acceptor; for dehydratase activity of the active site. The segment at 1474–1619 is C-terminal hotdog fold; that stretch reads LNSRMSSGVI…FQGIPRKVLN (146 aa). The Proton donor; for dehydratase activity role is filled by Asp1533. Residues 1619-1657 are disordered; it reads NTAMPPPKSQNEAPVRSAPAKPAAKPPKSASSEHSGHFA. The segment covering 1635 to 1650 has biased composition (low complexity); that stretch reads SAPAKPAAKPPKSASS. One can recognise a Carrier 1 domain in the interval 1678–1752; it reads RNPMLAVFKI…DLATHLGLDT (75 aa). Residue Ser1712 is modified to O-(pantetheine 4'-phosphoryl)serine. A compositionally biased stretch (low complexity) spans 1755–1790; it reads SDQSSGQSSSSGGLSPRSDSIGEITSSATTPPSLSP. The interval 1755-1796 is disordered; the sequence is SDQSSGQSSSSGGLSPRSDSIGEITSSATTPPSLSPRGSVSG. Residues 1793–1870 form the Carrier 2 domain; the sequence is SVSGSQCKDV…SFKHMFQQGH (78 aa). Ser1830 is modified (O-(pantetheine 4'-phosphoryl)serine). A thioesterase (TE) domain region spans residues 1882-2146; the sequence is LKQYRATSTL…ERVAAFIRST (265 aa). Ser1973 (for thioesterase activity) is an active-site residue.

Its function is as follows. Polyketide synthase; part of the Pks1 gene cluster that mediates the biosynthesis of an anthraquinone derivative pigment that contributes to conidial pigmentation that provides protection from UV radiation, heat and cold stress. The polyketide synthase Pks1 produces 1-acetyl-2,4,6,8-tetrahydroxy-9,10-anthraquinone though condensation of acetyl-CoA with malonyl-CoA. The dehydratase EthD and the laccase Mlac1 further convert the anthraquinone derivative into the final conidial pigment. The sequence is that of Polyketide synthase 1 from Metarhizium guizhouense (strain ARSEF 977).